The primary structure comprises 392 residues: HORMA domain-containing protein 1 (392 aa).

The HORMA domain maps to 25 to 227; the sequence is HQSLMFVKRL…TPFHTFRLKV (203 aa). Residues 323–359 are disordered; that stretch reads SELDVSESKTRSGKIFQSKMVNGNNQQGQTSKENRKR. Residues 341-353 show a composition bias toward polar residues; sequence KMVNGNNQQGQTS. Phosphoserine is present on Ser-375. Positions 381 to 384 match the Nuclear localization signal motif; it reads KKRR.

Interacts with HORMAD2. Interacts with IHO1. Phosphorylated at Ser-375 in a SPO11-dependent manner. As to expression, specifically expressed in meiotic germ cells.

Its subcellular location is the nucleus. The protein resides in the chromosome. It is found in the cytoplasm. In terms of biological role, plays a key role in meiotic progression. Regulates 3 different functions during meiosis: ensures that sufficient numbers of processed DNA double-strand breaks (DSBs) are available for successful homology search by increasing the steady-state numbers of single-stranded DSB ends. Promotes synaptonemal-complex formation independently of its role in homology search. Plays a key role in the male mid-pachytene checkpoint and the female meiotic prophase checkpoint: required for efficient build-up of ATR activity on unsynapsed chromosome regions, a process believed to form the basis of meiotic silencing of unsynapsed chromatin (MSUC) and meiotic prophase quality control in both sexes. The protein is HORMA domain-containing protein 1 of Mus musculus (Mouse).